Reading from the N-terminus, the 321-residue chain is Annexin A5 (321 aa).

4 Annexin repeats span residues 15–86 (FDAR…SLMR), 87–158 (PARI…VLLQ), 170–242 (ALVE…AVVK), and 246–317 (SVPA…LLCG).

Belongs to the annexin family.

In terms of biological role, collagen-binding protein. The chain is Annexin A5 (ANXA5) from Gallus gallus (Chicken).